Reading from the N-terminus, the 127-residue chain is Large ribosomal subunit protein bL12 (127 aa).

Belongs to the bacterial ribosomal protein bL12 family. As to quaternary structure, homodimer. Part of the ribosomal stalk of the 50S ribosomal subunit. Forms a multimeric L10(L12)X complex, where L10 forms an elongated spine to which 2 to 4 L12 dimers bind in a sequential fashion. Binds GTP-bound translation factors.

Functionally, forms part of the ribosomal stalk which helps the ribosome interact with GTP-bound translation factors. Is thus essential for accurate translation. The chain is Large ribosomal subunit protein bL12 from Thiobacillus denitrificans (strain ATCC 25259 / T1).